The primary structure comprises 729 residues: Probable pre-mRNA-splicing factor ATP-dependent RNA helicase DEAH3 (729 aa).

The 170-residue stretch at 75-244 (LNTLNSNQTL…FSGAPLMKVP (170 aa)) folds into the Helicase ATP-binding domain. 88 to 95 (GETGSGKT) is an ATP binding site. The DEAH box signature appears at 191–194 (DEAH). The 181-residue stretch at 269 to 449 (TVVQIHMCEP…NTVLTLKKLG (181 aa)) folds into the Helicase C-terminal domain.

Belongs to the DEAD box helicase family. DEAH subfamily. PRP43 sub-subfamily.

It carries out the reaction ATP + H2O = ADP + phosphate + H(+). Its function is as follows. May be involved in pre-mRNA splicing. This is Probable pre-mRNA-splicing factor ATP-dependent RNA helicase DEAH3 from Arabidopsis thaliana (Mouse-ear cress).